A 234-amino-acid chain; its full sequence is Small ribosomal subunit protein uS3 (234 aa).

Residues 39-107 enclose the KH type-2 domain; that stretch reads IRKYVKKELY…EIAVNIKEER (69 aa). Positions 213–222 are enriched in basic and acidic residues; it reads PTEKAEETTS. The segment at 213–234 is disordered; the sequence is PTEKAEETTSKPKRRPAKKRGK. Residues 223–234 are compositionally biased toward basic residues; that stretch reads KPKRRPAKKRGK.

It belongs to the universal ribosomal protein uS3 family. In terms of assembly, part of the 30S ribosomal subunit. Forms a tight complex with proteins S10 and S14.

Functionally, binds the lower part of the 30S subunit head. Binds mRNA in the 70S ribosome, positioning it for translation. This is Small ribosomal subunit protein uS3 from Aliarcobacter butzleri (strain RM4018) (Arcobacter butzleri).